The primary structure comprises 345 residues: Centromere protein U (345 aa).

Composition is skewed to basic residues over residues 1-10 (MSSKKRTKRN) and 19-29 (HKGRSHPRRKF). Disordered regions lie at residues 1–37 (MSSK…EPDV) and 64–153 (AVDA…SSVQ). Residues 88 to 106 (NAERSEKMLLETPEGDVHE) show a composition bias toward basic and acidic residues. The span at 142–152 (SDSSVNSPSSV) shows a compositional bias: low complexity. Residues 201 to 294 (CSAFEDQVTD…QDYLDYREEN (94 aa)) adopt a coiled-coil conformation. The Nuclear localization signal motif lies at 222–239 (KKKNAKVVADIKKKRQRL).

It belongs to the CENP-U/AME1 family. Interacts with CENPH-CENPI complex at the kinetochore.

It is found in the nucleus. Its subcellular location is the chromosome. The protein localises to the centromere. Its function is as follows. Probable component of a centromeric complex involved in assembly of kinetochore proteins, mitotic progression and chromosome segregation. Required for maintenance of sister chromatid adhesion during mitotic checkpoint activation. The polypeptide is Centromere protein U (CENPU) (Gallus gallus (Chicken)).